A 230-amino-acid chain; its full sequence is MTSVLELKATARPKSGKGAARAERRAGRVPGVIYGDNQSPLPISVEEKELRLRILAGRFLTTVFDVVLDGKKHRVIPRDYHLDPVRDFPIHVDFLRLGAGATIRVSVPLHLKGLEVAPGVKRGGTFNIVTHTVELEAPAENIPQFIEADVSTLDIGVSLHLSDIALPTGVKSVSRDDVTLVTIVPPSGYNEDKAAAGAAPAAAAAPAAAAKAPAAAAKAPAAAAPAAKKK.

The protein belongs to the bacterial ribosomal protein bL25 family. CTC subfamily. As to quaternary structure, part of the 50S ribosomal subunit; part of the 5S rRNA/L5/L18/L25 subcomplex. Contacts the 5S rRNA. Binds to the 5S rRNA independently of L5 and L18.

In terms of biological role, this is one of the proteins that binds to the 5S RNA in the ribosome where it forms part of the central protuberance. The sequence is that of Large ribosomal subunit protein bL25 (rplY) from Rhodopseudomonas palustris (strain ATCC BAA-98 / CGA009).